Reading from the N-terminus, the 158-residue chain is Endoribonuclease YbeY (158 aa).

Zn(2+) is bound by residues H121, H125, and H131.

Belongs to the endoribonuclease YbeY family. Zn(2+) is required as a cofactor.

It localises to the cytoplasm. Its function is as follows. Single strand-specific metallo-endoribonuclease involved in late-stage 70S ribosome quality control and in maturation of the 3' terminus of the 16S rRNA. This chain is Endoribonuclease YbeY, found in Exiguobacterium sp. (strain ATCC BAA-1283 / AT1b).